Reading from the N-terminus, the 359-residue chain is Putative X-Core fused protein (359 aa).

Disordered stretches follow at residues 25–48 (SRGR…VPAD) and 312–359 (NAPI…ESQC). Residues 325–352 (VRRRGRSPRRRTPSPRRRRSESPRRRRS) are compositionally biased toward basic residues.

The chain is Putative X-Core fused protein from Homo sapiens (Human).